Consider the following 339-residue polypeptide: Phenylalanine--tRNA ligase alpha subunit (339 aa).

Residue Glu253 participates in Mg(2+) binding.

It belongs to the class-II aminoacyl-tRNA synthetase family. Phe-tRNA synthetase alpha subunit type 1 subfamily. As to quaternary structure, tetramer of two alpha and two beta subunits. Mg(2+) serves as cofactor.

The protein localises to the cytoplasm. The enzyme catalyses tRNA(Phe) + L-phenylalanine + ATP = L-phenylalanyl-tRNA(Phe) + AMP + diphosphate + H(+). In Ruthia magnifica subsp. Calyptogena magnifica, this protein is Phenylalanine--tRNA ligase alpha subunit.